The following is a 176-amino-acid chain: Large ribosomal subunit protein uL16 (176 aa).

Belongs to the universal ribosomal protein uL16 family.

The chain is Large ribosomal subunit protein uL16 from Thermoplasma volcanium (strain ATCC 51530 / DSM 4299 / JCM 9571 / NBRC 15438 / GSS1).